The chain runs to 222 residues: Proteoglycan 3 (222 aa).

An N-terminal signal peptide occupies residues Met-1–Ala-17. The segment covering Asn-27–Arg-46 has biased composition (basic and acidic residues). Residues Asn-27–Gln-100 are disordered. The span at Phe-71–Pro-81 shows a compositional bias: acidic residues. The segment covering Ala-83–Thr-97 has biased composition (basic and acidic residues). The 117-residue stretch at Cys-105–Ser-221 folds into the C-type lectin domain. Cystine bridges form between Cys-126–Cys-220 and Cys-197–Cys-212.

As to expression, expressed in bone marrow, spleen, and thymus. Not detected in heart, liver or lung.

Possesses similar cytotoxic and cytostimulatory activities to PRG2/MBP. The protein is Proteoglycan 3 of Mus musculus (Mouse).